A 20-amino-acid chain; its full sequence is Short cationic peptide-6a (20 aa).

Position 20 is a serine amide (Ser-20).

As to expression, expressed by the venom gland.

The protein localises to the secreted. This Cupiennius salei (American wandering spider) protein is Short cationic peptide-6a.